The primary structure comprises 353 residues: Melanin-concentrating hormone receptor 1 (353 aa).

The segment at 1–26 is disordered; it reads MDLQTSLLSTGPNASNISDGQDNLTL. Topologically, residues 1-45 are extracellular; sequence MDLQTSLLSTGPNASNISDGQDNLTLPGSPPRTGSVSYINIIMPS. Asn-13, Asn-16, and Asn-23 each carry an N-linked (GlcNAc...) asparagine glycan. The helical transmembrane segment at 46–66 threads the bilayer; sequence VFGTICLLGIVGNSTVIFAVV. Topologically, residues 67 to 79 are cytoplasmic; sequence KKSKLHWCSNVPD. A helical membrane pass occupies residues 80-100; sequence IFIINLSVVDLLFLLGMPFMI. The Extracellular segment spans residues 101-116; the sequence is HQLMGNGVWHFGETMC. A disulfide bond links Cys-116 and Cys-194. The helical transmembrane segment at 117–139 threads the bilayer; sequence TLITAMDANSQFTSTYILTAMTI. The Cytoplasmic portion of the chain corresponds to 140–161; that stretch reads DRYLATVHPISSTKFRKPSMAT. The chain crosses the membrane as a helical span at residues 162-182; it reads LVICLLWALSFISITPVWLYA. The Extracellular segment spans residues 183–204; sequence RLIPFPGGAVGCGIRLPNPDTD. The helical transmembrane segment at 205–225 threads the bilayer; sequence LYWFTLYQFFLAFALPFVVIT. Topologically, residues 226–256 are cytoplasmic; sequence AAYVKILQRMTSSVAPASQRSIRLRTKRVTR. The chain crosses the membrane as a helical span at residues 257–277; the sequence is TAIAICLVFFVCWAPYYVLQL. The Extracellular portion of the chain corresponds to 278 to 294; sequence TQLSISRPTLTFVYLYN. Residues 295–315 traverse the membrane as a helical segment; sequence AAISLGYANSCLNPFVYIVLC. Residues 316-353 lie on the Cytoplasmic side of the membrane; the sequence is ETFRKRLVLSVKPAAQGQLRTVSNAQTADEERTESKGT.

The protein belongs to the G-protein coupled receptor 1 family. As to quaternary structure, interacts with NCDN. In terms of tissue distribution, high level in the brain, moderate amounts in the eye and skeletal muscle, and small amounts in tongue and pituitary.

The protein resides in the cell membrane. Receptor for melanin-concentrating hormone, coupled to G proteins that inhibit adenylyl cyclase. The sequence is that of Melanin-concentrating hormone receptor 1 from Rattus norvegicus (Rat).